A 305-amino-acid polypeptide reads, in one-letter code: Serine/threonine-protein kinase 16 (305 aa).

Residue G2 is the site of N-myristoyl glycine attachment. Residues C6 and C8 are each lipidated (S-palmitoyl cysteine). In terms of domain architecture, Protein kinase spans 20 to 293; sequence YLFVQKLGEG…PVLLSQLEAL (274 aa). ATP-binding positions include 26–34 and K49; that span reads LGEGGFSYV. D148 serves as the catalytic Proton acceptor. The tract at residues 166 to 202 is activation loop; that stretch reads DLGSMNQACIQVEGSRQALALQDWAAQRCTISYRAPE. S197 is subject to Phosphoserine; by autocatalysis. At Y198 the chain carries Phosphotyrosine; by autocatalysis.

Belongs to the protein kinase superfamily. Ser/Thr protein kinase family. As to quaternary structure, monomer. Interacts with DRG1 (via its N-terminal); the interaction phosphorylates DRG1. In terms of processing, mainly autophosphorylated on serine/threonine residues. Also autophosphorylated on Tyr-198. Expressed in heart, liver, brain, spleen, lung, skeletal muscle, kidney and testis.

The protein localises to the cytoplasm. It localises to the perinuclear region. The protein resides in the membrane. It carries out the reaction L-seryl-[protein] + ATP = O-phospho-L-seryl-[protein] + ADP + H(+). It catalyses the reaction L-threonyl-[protein] + ATP = O-phospho-L-threonyl-[protein] + ADP + H(+). The enzyme catalyses L-tyrosyl-[protein] + ATP = O-phospho-L-tyrosyl-[protein] + ADP + H(+). Membrane-associated protein kinase that phosphorylates on serine and threonine residues. In vitro substrates include DRG1, ENO1 and EIF4EBP1. Also autophosphorylates. May be involved in secretory vesicle trafficking or intracellular signaling. May have a role in regulating stromal-epithelial interactions that occur during ductal morphogenesis in the mammary gland. May be involved in TGF-beta signaling. Able to autophosphorylate on Tyr residue; it is however unclear whether it has tyrosine-protein kinase toward other proteins. This is Serine/threonine-protein kinase 16 (Stk16) from Rattus norvegicus (Rat).